The primary structure comprises 349 residues: Transmembrane protein 255A (349 aa).

4 consecutive transmembrane segments (helical) span residues 30-50 (IYVT…GLAA), 57-77 (VTVG…LGII), 89-109 (LVAS…CAIV), and 226-246 (TILN…LGGF). The segment at 301–329 (VFPSSPPSGLSDEPQSASPSPSYMWSSSA) is disordered. Over residues 316–329 (SASPSPSYMWSSSA) the composition is skewed to low complexity.

It belongs to the TMEM255 family.

It is found in the membrane. This Macaca fascicularis (Crab-eating macaque) protein is Transmembrane protein 255A (TMEM255A).